A 151-amino-acid chain; its full sequence is Deoxyuridine 5'-triphosphate nucleotidohydrolase (151 aa).

Substrate is bound by residues 70–72 (RSG), Asn-83, 87–89 (LID), and Met-97.

Belongs to the dUTPase family. The cofactor is Mg(2+).

It catalyses the reaction dUTP + H2O = dUMP + diphosphate + H(+). The protein operates within pyrimidine metabolism; dUMP biosynthesis; dUMP from dCTP (dUTP route): step 2/2. This enzyme is involved in nucleotide metabolism: it produces dUMP, the immediate precursor of thymidine nucleotides and it decreases the intracellular concentration of dUTP so that uracil cannot be incorporated into DNA. The polypeptide is Deoxyuridine 5'-triphosphate nucleotidohydrolase (Pseudomonas putida (strain ATCC 700007 / DSM 6899 / JCM 31910 / BCRC 17059 / LMG 24140 / F1)).